Reading from the N-terminus, the 397-residue chain is Elongation factor Tu (397 aa).

A tr-type G domain is found at 10–207; the sequence is KPHVNVGTIG…ACDSYIPDPQ (198 aa). Residues 19 to 26 form a G1 region; the sequence is GHIDHGKT. 19–26 provides a ligand contact to GTP; sequence GHIDHGKT. Thr-26 is a binding site for Mg(2+). The G2 stretch occupies residues 60–64; sequence GITIA. The G3 stretch occupies residues 81–84; that stretch reads DCPG. GTP-binding positions include 81–85 and 136–139; these read DCPGH and NKCD. The tract at residues 136–139 is G4; sequence NKCD. The tract at residues 174-176 is G5; the sequence is SAL.

Belongs to the TRAFAC class translation factor GTPase superfamily. Classic translation factor GTPase family. EF-Tu/EF-1A subfamily. As to quaternary structure, monomer.

The protein resides in the cytoplasm. It catalyses the reaction GTP + H2O = GDP + phosphate + H(+). Functionally, GTP hydrolase that promotes the GTP-dependent binding of aminoacyl-tRNA to the A-site of ribosomes during protein biosynthesis. This chain is Elongation factor Tu, found in Lawsonia intracellularis (strain PHE/MN1-00).